The primary structure comprises 88 residues: Putative defensin-like protein 256 (88 aa).

Residues 1-25 (MKSSIFFKLLLLVSLLVVIFRQSYA) form the signal peptide. Cystine bridges form between cysteine 30-cysteine 46, cysteine 36-cysteine 53, and cysteine 40-cysteine 55.

This sequence belongs to the DEFL family.

Its subcellular location is the secreted. The protein is Putative defensin-like protein 256 of Arabidopsis thaliana (Mouse-ear cress).